Consider the following 94-residue polypeptide: Small ribosomal subunit protein uS17 (94 aa).

Residues 1-22 (MSEQTSAASTTDRGDRKTRRGY) form a disordered region.

Belongs to the universal ribosomal protein uS17 family. Part of the 30S ribosomal subunit.

Its function is as follows. One of the primary rRNA binding proteins, it binds specifically to the 5'-end of 16S ribosomal RNA. The protein is Small ribosomal subunit protein uS17 of Kineococcus radiotolerans (strain ATCC BAA-149 / DSM 14245 / SRS30216).